We begin with the raw amino-acid sequence, 299 residues long: Formamidopyrimidine-DNA glycosylase (299 aa).

Residue Pro2 is the Schiff-base intermediate with DNA of the active site. Residue Glu3 is the Proton donor of the active site. Residue Lys58 is the Proton donor; for beta-elimination activity of the active site. Residues His106, Arg125, and Lys168 each coordinate DNA. An FPG-type zinc finger spans residues 259-295 (RVYDRVGHACPTKGCTGRVGRIVQGGRSTFFCETCQV). Arg285 serves as the catalytic Proton donor; for delta-elimination activity.

The protein belongs to the FPG family. As to quaternary structure, monomer. The cofactor is Zn(2+).

It carries out the reaction Hydrolysis of DNA containing ring-opened 7-methylguanine residues, releasing 2,6-diamino-4-hydroxy-5-(N-methyl)formamidopyrimidine.. The catalysed reaction is 2'-deoxyribonucleotide-(2'-deoxyribose 5'-phosphate)-2'-deoxyribonucleotide-DNA = a 3'-end 2'-deoxyribonucleotide-(2,3-dehydro-2,3-deoxyribose 5'-phosphate)-DNA + a 5'-end 5'-phospho-2'-deoxyribonucleoside-DNA + H(+). Involved in base excision repair of DNA damaged by oxidation or by mutagenic agents. Acts as a DNA glycosylase that recognizes and removes damaged bases. Has a preference for oxidized purines, such as 7,8-dihydro-8-oxoguanine (8-oxoG). Has AP (apurinic/apyrimidinic) lyase activity and introduces nicks in the DNA strand. Cleaves the DNA backbone by beta-delta elimination to generate a single-strand break at the site of the removed base with both 3'- and 5'-phosphates. This chain is Formamidopyrimidine-DNA glycosylase, found in Methylorubrum extorquens (strain CM4 / NCIMB 13688) (Methylobacterium extorquens).